A 302-amino-acid polypeptide reads, in one-letter code: Sulfate adenylyltransferase subunit 2 (302 aa).

This sequence belongs to the PAPS reductase family. CysD subfamily. Heterodimer composed of CysD, the smaller subunit, and CysN.

It catalyses the reaction sulfate + ATP + H(+) = adenosine 5'-phosphosulfate + diphosphate. It functions in the pathway sulfur metabolism; hydrogen sulfide biosynthesis; sulfite from sulfate: step 1/3. Its function is as follows. With CysN forms the ATP sulfurylase (ATPS) that catalyzes the adenylation of sulfate producing adenosine 5'-phosphosulfate (APS) and diphosphate, the first enzymatic step in sulfur assimilation pathway. APS synthesis involves the formation of a high-energy phosphoric-sulfuric acid anhydride bond driven by GTP hydrolysis by CysN coupled to ATP hydrolysis by CysD. This chain is Sulfate adenylyltransferase subunit 2, found in Shewanella pealeana (strain ATCC 700345 / ANG-SQ1).